A 257-amino-acid polypeptide reads, in one-letter code: MAHSQVGIQLISESTEKTLAELIALCAEHNIIHNEKSPLALVQTDDRLELRKLDEPKLGAVYVDFVGGTMAHRRKFGGGRGEAVAKAVGIKGSALPTVIDATAGLGRDAFVLAAIGCQVRLVERHPVVFLLLQDGLNRAYQDEEIGEMLQQNLHLLNVQHINELDPNSDYADVVYLDPMYPHKQKSALVKKEMRVFQHLVGADLDADELLLPALQLAKKRVVVKRPDYAEFLCGKQPHFSRETKNHRFDIYMGASQC.

Residues 107–108, 123–124, and D177 contribute to the S-adenosyl-L-methionine site; these read RD and ER.

Belongs to the methyltransferase superfamily. RsmJ family.

Its subcellular location is the cytoplasm. The enzyme catalyses guanosine(1516) in 16S rRNA + S-adenosyl-L-methionine = N(2)-methylguanosine(1516) in 16S rRNA + S-adenosyl-L-homocysteine + H(+). In terms of biological role, specifically methylates the guanosine in position 1516 of 16S rRNA. The sequence is that of Ribosomal RNA small subunit methyltransferase J from Haemophilus influenzae (strain 86-028NP).